The following is a 464-amino-acid chain: UDP-N-acetylmuramate--L-alanine ligase (464 aa).

112 to 118 (GTHGKTT) provides a ligand contact to ATP.

It belongs to the MurCDEF family.

Its subcellular location is the cytoplasm. It carries out the reaction UDP-N-acetyl-alpha-D-muramate + L-alanine + ATP = UDP-N-acetyl-alpha-D-muramoyl-L-alanine + ADP + phosphate + H(+). It functions in the pathway cell wall biogenesis; peptidoglycan biosynthesis. Its function is as follows. Cell wall formation. This Chromobacterium violaceum (strain ATCC 12472 / DSM 30191 / JCM 1249 / CCUG 213 / NBRC 12614 / NCIMB 9131 / NCTC 9757 / MK) protein is UDP-N-acetylmuramate--L-alanine ligase.